Here is a 437-residue protein sequence, read N- to C-terminus: Glutamyl-tRNA reductase (437 aa).

Substrate is bound by residues 49–52 (TCNR), serine 109, 114–116 (EGQ), and glutamine 120. Catalysis depends on cysteine 50, which acts as the Nucleophile. Position 198-203 (198-203 (GAGRMS)) interacts with NADP(+).

Belongs to the glutamyl-tRNA reductase family. In terms of assembly, homodimer.

It catalyses the reaction (S)-4-amino-5-oxopentanoate + tRNA(Glu) + NADP(+) = L-glutamyl-tRNA(Glu) + NADPH + H(+). The protein operates within porphyrin-containing compound metabolism; protoporphyrin-IX biosynthesis; 5-aminolevulinate from L-glutamyl-tRNA(Glu): step 1/2. It functions in the pathway porphyrin-containing compound metabolism; chlorophyll biosynthesis. Its function is as follows. Catalyzes the NADPH-dependent reduction of glutamyl-tRNA(Glu) to glutamate 1-semialdehyde (GSA). The sequence is that of Glutamyl-tRNA reductase from Synechococcus sp. (strain CC9311).